The primary structure comprises 104 residues: Flagellar hook-basal body complex protein FliE (104 aa).

It belongs to the FliE family.

The protein localises to the bacterial flagellum basal body. The protein is Flagellar hook-basal body complex protein FliE of Escherichia fergusonii (strain ATCC 35469 / DSM 13698 / CCUG 18766 / IAM 14443 / JCM 21226 / LMG 7866 / NBRC 102419 / NCTC 12128 / CDC 0568-73).